A 193-amino-acid chain; its full sequence is MRLCDRDIEAWLDEGRLAITPRPPVERINGATVDVRLGNKFRTFRGHTAAYIDLSGPKDEVSAALDRVMSDEIVLNDGEAFFLHPGELALAVTYESVTLPADLVGWLDGRSSLARLGLMVHVTAHRIDPGWQGCIVLEFYNSGKLPLALRPGMLIGALSFEPLSGPAARPYNRRQDAKYRDQQGAVASRIDKD.

DCTP-binding positions include 110–115, Asp128, 136–138, Tyr171, Lys178, and Gln182; these read RSSLAR and VLE. Catalysis depends on Glu138, which acts as the Proton donor/acceptor. The interval 169-193 is disordered; sequence RPYNRRQDAKYRDQQGAVASRIDKD.

It belongs to the dCTP deaminase family. Homotrimer.

It catalyses the reaction dCTP + H2O + H(+) = dUTP + NH4(+). It functions in the pathway pyrimidine metabolism; dUMP biosynthesis; dUMP from dCTP (dUTP route): step 1/2. In terms of biological role, catalyzes the deamination of dCTP to dUTP. In Cronobacter sakazakii (strain ATCC BAA-894) (Enterobacter sakazakii), this protein is dCTP deaminase.